The following is a 573-amino-acid chain: Plasmepsin X (573 aa).

An N-terminal signal peptide occupies residues 1 to 26; the sequence is MKRISPLNTLFYLSLFFSYTFKGLKC. Residues 27 to 221 constitute a propeptide that is removed on maturation; the sequence is TRIYKIGTKA…SSIEKNFIAL (195 aa). 2 cysteine pairs are disulfide-bonded: Cys39–Cys51 and Cys42–Cys48. The tract at residues 167 to 211 is disordered; sequence KGNKNFTNNENNSDNENNSDNENNSDNENNLDNENNLDNENNSDN. Positions 183 to 203 are enriched in acidic residues; the sequence is NNSDNENNSDNENNLDNENNL. A Peptidase A1 domain is found at 248 to 567; sequence FVGELLVGTP…ESRPSMVGVA (320 aa). Asp266 is a catalytic residue. Residues Cys279 and Cys284 are joined by a disulfide bond. Asn334 carries an N-linked (GlcNAc...) asparagine glycan. Cys447 and Cys448 are disulfide-bonded. Asp457 is a catalytic residue. Cys482 and Cys521 are disulfide-bonded.

The protein belongs to the peptidase A1 family. Autocleaved into a p16 prodomain form and two mature forms p44 and p51.

It is found in the cytoplasmic vesicle. It localises to the secretory vesicle. With respect to regulation, inhibited by aminohydantoin compounds such as CWHM-117. During the asexual blood stage, processes key proteins essential for merozoite egress and invasion of host erythrocytes. Cleaves and activates proteases SUB1 and SUB2. May process members of the EBL and Rh protein families. Also cleaves apical membrane protein AMA1. During the mosquito vector stage and probably in ookinetes, cleaves CelTOS. This is Plasmepsin X from Plasmodium falciparum (isolate NF54).